Reading from the N-terminus, the 959-residue chain is E3 ubiquitin-protein ligase arkadia-B (959 aa).

The span at 51 to 66 shows a compositional bias: polar residues; the sequence is CSDTNKQQSDLNSNGT. 3 disordered regions span residues 51 to 171, 189 to 212, and 225 to 271; these read CSDT…VSSL, RKRF…MLQR, and LLPS…SGGM. Residues 112–131 are compositionally biased toward low complexity; that stretch reads SSFSDCISSPSSSSHFGDSD. The span at 142-156 shows a compositional bias: polar residues; the sequence is PLSSVNSTPRTQSAR. The segment covering 228–246 has biased composition (low complexity); the sequence is SSSSSSENDLSSESSSSSS. The span at 256-267 shows a compositional bias: polar residues; it reads TGENRQDGTTLP. The SUMO interaction motif 1 (SIM) motif lies at 275–279; the sequence is VVVIE. The SUMO interaction motif 2 (SIM) motif lies at 300–306; that stretch reads EVEIVTV. A disordered region spans residues 318–341; that stretch reads HPRSHWGQNSQSGRTQEQRTRNRV. Residues 323–332 show a composition bias toward polar residues; sequence WGQNSQSGRT. Positions 355–359 match the SUMO interaction motif 3 (SIM) motif; that stretch reads VVDLT. Positions 370–397 are enriched in polar residues; it reads TTSGRVESQPVSIVSSLTSTSEPASDSM. Disordered stretches follow at residues 370–399, 475–499, 615–649, and 661–680; these read TTSG…SMSG, HFPH…SFRD, PRPL…MDYV, and PSLT…HLSA. The segment covering 475–487 has biased composition (basic residues); it reads HFPHHHHHHHHSS. Polar residues predominate over residues 620-632; the sequence is HQTSSCPHSNSAS. The segment covering 633 to 646 has biased composition (pro residues); sequence QPPPPPPPPPPPPM. A ubiquitin binding region spans residues 872-874; it reads YPH. Zn(2+) contacts are provided by Cys907 and Cys910. The RING-type; atypical zinc-finger motif lies at 907 to 948; that stretch reads CTICLSILEEGEDVRRLPCMHLFHQVCVDQWLITNKKCPICR. The tract at residues 922–926 is ubiquitin binding; that stretch reads RLPCM. 2 residues coordinate Zn(2+): His930 and Cys933.

This sequence belongs to the Arkadia family. In terms of assembly, monomer.

The protein localises to the nucleus. It localises to the cytoplasm. It is found in the PML body. It catalyses the reaction S-ubiquitinyl-[E2 ubiquitin-conjugating enzyme]-L-cysteine + [acceptor protein]-L-lysine = [E2 ubiquitin-conjugating enzyme]-L-cysteine + N(6)-ubiquitinyl-[acceptor protein]-L-lysine.. It functions in the pathway protein modification; protein ubiquitination. Its activity is regulated as follows. Binds free ubiquitin non-covalently via its RING-type zinc finger. Ubiquitin-binding leads to enhance the E3 ubiquitin-protein ligase activity by stabilizing the ubiquitin-conjugating enzyme E2 (donor ubiquitin) in the 'closed' conformation and activating ubiquitin transfer. Its function is as follows. E3 ubiquitin-protein ligase required for mesoderm patterning during embryonic development. Acts as an enhancer of the transcriptional responses of the smad2/smad3 effectors, which are activated downstream of BMP. Acts by mediating ubiquitination and degradation of SMAD inhibitors such as smad7, inducing their proteasomal degradation and thereby enhancing the transcriptional activity of TGF-beta and BMP. Specifically binds polysumoylated chains via SUMO interaction motifs (SIMs) and mediates ubiquitination of sumoylated substrates. The regulation of the BMP-SMAD signaling is however independent of sumoylation and is not dependent of SUMO interaction motifs (SIMs). The polypeptide is E3 ubiquitin-protein ligase arkadia-B (rnf111-b) (Xenopus laevis (African clawed frog)).